An 871-amino-acid polypeptide reads, in one-letter code: Leucine--tRNA ligase (871 aa).

A 'HIGH' region motif is present at residues 42-52 (PYPSGSLHMGH). The short motif at 634–638 (TMSKS) is the 'KMSKS' region element. Lysine 637 serves as a coordination point for ATP.

The protein belongs to the class-I aminoacyl-tRNA synthetase family.

Its subcellular location is the cytoplasm. The enzyme catalyses tRNA(Leu) + L-leucine + ATP = L-leucyl-tRNA(Leu) + AMP + diphosphate. In Nostoc punctiforme (strain ATCC 29133 / PCC 73102), this protein is Leucine--tRNA ligase.